The primary structure comprises 410 residues: LL-diaminopimelate aminotransferase (410 aa).

Substrate-binding residues include Y15 and G42. Residues Y72, 108 to 109 (AK), Y132, N188, Y219, and 247 to 249 (SFS) contribute to the pyridoxal 5'-phosphate site. The substrate site is built by K109, Y132, and N188. K250 bears the N6-(pyridoxal phosphate)lysine mark. The pyridoxal 5'-phosphate site is built by R258 and N293. N293 and R389 together coordinate substrate.

The protein belongs to the class-I pyridoxal-phosphate-dependent aminotransferase family. LL-diaminopimelate aminotransferase subfamily. Homodimer. The cofactor is pyridoxal 5'-phosphate.

The catalysed reaction is (2S,6S)-2,6-diaminopimelate + 2-oxoglutarate = (S)-2,3,4,5-tetrahydrodipicolinate + L-glutamate + H2O + H(+). It participates in amino-acid biosynthesis; L-lysine biosynthesis via DAP pathway; LL-2,6-diaminopimelate from (S)-tetrahydrodipicolinate (aminotransferase route): step 1/1. Involved in the synthesis of meso-diaminopimelate (m-DAP or DL-DAP), required for both lysine and peptidoglycan biosynthesis. Catalyzes the direct conversion of tetrahydrodipicolinate to LL-diaminopimelate. In Bacteroides fragilis (strain YCH46), this protein is LL-diaminopimelate aminotransferase.